The following is a 369-amino-acid chain: Pyrimidine monooxygenase RutA (369 aa).

FMN-binding positions include 49 to 50 (IK), Asn115, Glu124, 140 to 141 (RY), and Ser190.

Belongs to the NtaA/SnaA/DszA monooxygenase family. RutA subfamily.

The catalysed reaction is uracil + FMNH2 + NADH + O2 = (Z)-3-ureidoacrylate + FMN + NAD(+) + H2O + H(+). The enzyme catalyses thymine + FMNH2 + NADH + O2 = (Z)-2-methylureidoacrylate + FMN + NAD(+) + H2O + H(+). Catalyzes the pyrimidine ring opening between N-3 and C-4 by an unusual flavin hydroperoxide-catalyzed mechanism, adding oxygen atoms in the process to yield ureidoacrylate peracid, that immediately reacts with FMN forming ureidoacrylate and FMN-N(5)-oxide. The FMN-N(5)-oxide reacts spontaneously with NADH to produce FMN. Requires the flavin reductase RutF to regenerate FMN in vivo. This chain is Pyrimidine monooxygenase RutA, found in Acinetobacter baylyi (strain ATCC 33305 / BD413 / ADP1).